Consider the following 360-residue polypeptide: Peptide chain release factor 1 (360 aa).

Gln237 is subject to N5-methylglutamine.

The protein belongs to the prokaryotic/mitochondrial release factor family. Post-translationally, methylated by PrmC. Methylation increases the termination efficiency of RF1.

The protein localises to the cytoplasm. In terms of biological role, peptide chain release factor 1 directs the termination of translation in response to the peptide chain termination codons UAG and UAA. The polypeptide is Peptide chain release factor 1 (Pseudomonas syringae pv. syringae (strain B728a)).